The chain runs to 1238 residues: DNA-directed RNA polymerase subunit beta (1238 aa).

The disordered stretch occupies residues glutamate 1187 to isoleucine 1238. A compositionally biased stretch (acidic residues) spans proline 1193 to isoleucine 1238.

This sequence belongs to the RNA polymerase beta chain family. The RNAP catalytic core consists of 2 alpha, 1 beta, 1 beta' and 1 omega subunit. When a sigma factor is associated with the core the holoenzyme is formed, which can initiate transcription.

It catalyses the reaction RNA(n) + a ribonucleoside 5'-triphosphate = RNA(n+1) + diphosphate. Functionally, DNA-dependent RNA polymerase catalyzes the transcription of DNA into RNA using the four ribonucleoside triphosphates as substrates. This is DNA-directed RNA polymerase subunit beta from Thermoanaerobacter pseudethanolicus (strain ATCC 33223 / 39E) (Clostridium thermohydrosulfuricum).